The chain runs to 239 residues: Sugar fermentation stimulation protein homolog (239 aa).

The protein belongs to the SfsA family.

The protein is Sugar fermentation stimulation protein homolog of Synechococcus sp. (strain JA-3-3Ab) (Cyanobacteria bacterium Yellowstone A-Prime).